Consider the following 61-residue polypeptide: Small ribosomal subunit protein uS14B (61 aa).

The Zn(2+) site is built by C24, C27, C40, and C43.

This sequence belongs to the universal ribosomal protein uS14 family. Zinc-binding uS14 subfamily. In terms of assembly, part of the 30S ribosomal subunit. Contacts proteins S3 and S10. Zn(2+) is required as a cofactor.

Functionally, binds 16S rRNA, required for the assembly of 30S particles and may also be responsible for determining the conformation of the 16S rRNA at the A site. In Mycobacterium bovis (strain ATCC BAA-935 / AF2122/97), this protein is Small ribosomal subunit protein uS14B.